The following is a 210-amino-acid chain: Dephospho-CoA kinase (210 aa).

The DPCK domain occupies 4–202 (WVGLTGGIGS…AFYSGIFASK (199 aa)). An ATP-binding site is contributed by 12–17 (GSGKSA).

Belongs to the CoaE family.

It is found in the cytoplasm. It carries out the reaction 3'-dephospho-CoA + ATP = ADP + CoA + H(+). The protein operates within cofactor biosynthesis; coenzyme A biosynthesis; CoA from (R)-pantothenate: step 5/5. Its function is as follows. Catalyzes the phosphorylation of the 3'-hydroxyl group of dephosphocoenzyme A to form coenzyme A. This Neisseria gonorrhoeae protein is Dephospho-CoA kinase.